A 468-amino-acid chain; its full sequence is ATP synthase subunit beta (468 aa).

155–162 (GGAGVGKT) contacts ATP.

The protein belongs to the ATPase alpha/beta chains family. In terms of assembly, F-type ATPases have 2 components, CF(1) - the catalytic core - and CF(0) - the membrane proton channel. CF(1) has five subunits: alpha(3), beta(3), gamma(1), delta(1), epsilon(1). CF(0) has three main subunits: a(1), b(2) and c(9-12). The alpha and beta chains form an alternating ring which encloses part of the gamma chain. CF(1) is attached to CF(0) by a central stalk formed by the gamma and epsilon chains, while a peripheral stalk is formed by the delta and b chains.

The protein resides in the cell membrane. It carries out the reaction ATP + H2O + 4 H(+)(in) = ADP + phosphate + 5 H(+)(out). In terms of biological role, produces ATP from ADP in the presence of a proton gradient across the membrane. The catalytic sites are hosted primarily by the beta subunits. The polypeptide is ATP synthase subunit beta (Enterococcus hirae (strain ATCC 9790 / DSM 20160 / JCM 8729 / LMG 6399 / NBRC 3181 / NCIMB 6459 / NCDO 1258 / NCTC 12367 / WDCM 00089 / R)).